The primary structure comprises 88 residues: MKFLTSLLLLFVVVMVSAVNLSMAKESANQLTERLQELDGAAIQEPAELNRHKRLTCEIDRSLCLLHCRLKGYLRAYCSQQKVCRCVQ.

The signal sequence occupies residues 1-24 (MKFLTSLLLLFVVVMVSAVNLSMA). A propeptide spanning residues 25–54 (KESANQLTERLQELDGAAIQEPAELNRHKR) is cleaved from the precursor. 3 disulfides stabilise this stretch: C57–C78, C64–C84, and C68–C86.

This sequence belongs to the invertebrate defensin family. Type 1 subfamily. Hemocytes and fat body.

Its subcellular location is the secreted. Its function is as follows. Sapecins, which are potent bactericidal proteins, are produced in response to injury. Sapecin B is cytotoxic to Gram-positive bacteria. This chain is Sapecin-B, found in Sarcophaga peregrina (Flesh fly).